A 130-amino-acid chain; its full sequence is Protachykinin-1 (130 aa).

The first 19 residues, 1–19 (MKILVAVAVIFFISTQLSA), serve as a signal peptide directing secretion. Residues 20-56 (EEIGANDDFNYWSDWSDSDQIKEEMPEPFEHLLQRIA) constitute a propeptide that is removed on maturation. A methionine amide mark is found at M68 and M107.

The protein belongs to the tachykinin family. In terms of processing, the substance P form is cleaved at Pro-59 by the prolyl endopeptidase FAP (seprase) activity (in vitro). Substance P is also cleaved and degraded by Angiotensin-converting enzyme (ACE) and neprilysin (MME).

The protein resides in the secreted. In terms of biological role, tachykinins are active peptides which excite neurons, evoke behavioral responses, are potent vasodilators and secretagogues, and contract (directly or indirectly) many smooth muscles. The polypeptide is Protachykinin-1 (TAC1) (Bos taurus (Bovine)).